A 30-amino-acid chain; its full sequence is NADH-ubiquinone oxidoreductase chain 5 (30 aa).

Residues 7 to 27 form a helical membrane-spanning segment; that stretch reads NIIIIINSSLIIILFSSIFFF.

It belongs to the complex I subunit 5 family.

It localises to the mitochondrion inner membrane. The catalysed reaction is a ubiquinone + NADH + 5 H(+)(in) = a ubiquinol + NAD(+) + 4 H(+)(out). In terms of biological role, core subunit of the mitochondrial membrane respiratory chain NADH dehydrogenase (Complex I) that is believed to belong to the minimal assembly required for catalysis. Complex I functions in the transfer of electrons from NADH to the respiratory chain. The immediate electron acceptor for the enzyme is believed to be ubiquinone. In Pisaster ochraceus (Ochre sea star), this protein is NADH-ubiquinone oxidoreductase chain 5 (ND5).